The chain runs to 180 residues: Peptidyl-tRNA hydrolase (180 aa).

Tyr-13 provides a ligand contact to tRNA. The active-site Proton acceptor is the His-18. TRNA is bound by residues Tyr-58, Asn-60, and Asn-100.

It belongs to the PTH family. Monomer.

The protein resides in the cytoplasm. It carries out the reaction an N-acyl-L-alpha-aminoacyl-tRNA + H2O = an N-acyl-L-amino acid + a tRNA + H(+). Functionally, hydrolyzes ribosome-free peptidyl-tRNAs (with 1 or more amino acids incorporated), which drop off the ribosome during protein synthesis, or as a result of ribosome stalling. Its function is as follows. Catalyzes the release of premature peptidyl moieties from peptidyl-tRNA molecules trapped in stalled 50S ribosomal subunits, and thus maintains levels of free tRNAs and 50S ribosomes. This Fervidobacterium nodosum (strain ATCC 35602 / DSM 5306 / Rt17-B1) protein is Peptidyl-tRNA hydrolase.